The primary structure comprises 86 residues: Small ribosomal subunit protein bS20 (86 aa).

It belongs to the bacterial ribosomal protein bS20 family.

Binds directly to 16S ribosomal RNA. The sequence is that of Small ribosomal subunit protein bS20 from Bifidobacterium adolescentis (strain ATCC 15703 / DSM 20083 / NCTC 11814 / E194a).